The chain runs to 892 residues: Translation initiation factor IF-2 (892 aa).

The tract at residues 51–296 (REHGSAPNKL…KGKRKPSTLQ (246 aa)) is disordered. Positions 68–82 (STLNIPSTGGKSKSV) are enriched in polar residues. Over residues 99 to 217 (EQAKAEEQAQ…KMAAENEGKW (119 aa)) the composition is skewed to basic and acidic residues. Over residues 224–237 (QTESADYHVTTSQH) the composition is skewed to polar residues. Residues 239 to 254 (RAAEDENDAKVEGDRR) are compositionally biased toward basic and acidic residues. The span at 255–269 (SRTRGGKATKQKKGN) shows a compositional bias: basic residues. The segment covering 270-283 (KLSESKADREEARA) has biased composition (basic and acidic residues). The 170-residue stretch at 391–560 (HRAPVVTIMG…LLQAEVMELK (170 aa)) folds into the tr-type G domain. Residues 400-407 (GHVDHGKT) are G1. 400-407 (GHVDHGKT) contacts GTP. Residues 425-429 (GITQH) are G2. Residues 446-449 (DTPG) form a G3 region. Residues 446 to 450 (DTPGH) and 500 to 503 (NKID) contribute to the GTP site. Residues 500-503 (NKID) form a G4 region. The interval 536 to 538 (SAK) is G5.

It belongs to the TRAFAC class translation factor GTPase superfamily. Classic translation factor GTPase family. IF-2 subfamily.

Its subcellular location is the cytoplasm. One of the essential components for the initiation of protein synthesis. Protects formylmethionyl-tRNA from spontaneous hydrolysis and promotes its binding to the 30S ribosomal subunits. Also involved in the hydrolysis of GTP during the formation of the 70S ribosomal complex. This chain is Translation initiation factor IF-2, found in Yersinia enterocolitica serotype O:8 / biotype 1B (strain NCTC 13174 / 8081).